The primary structure comprises 611 residues: Sodium-coupled monocarboxylate transporter 1 (611 aa).

The Extracellular portion of the chain corresponds to 1-9 (MDASRDIGS). The chain crosses the membrane as a helical span at residues 10 to 30 (FVVWDYVVFAGMLLISAAIGI). The Cytoplasmic portion of the chain corresponds to 31–51 (YYAFAGGGQQTSKDFLMGGRS). A helical membrane pass occupies residues 52–72 (MSAVPVALSLTASFMSAVTVL). The Extracellular segment spans residues 73–86 (GTPAEVYRFGAIFS). A helical transmembrane segment spans residues 87–107 (IFVITYFFVVVISAEVFLPVF). The Cytoplasmic portion of the chain corresponds to 108 to 132 (YRLGITSTYEYLELRFNRCIRLCGT). A helical membrane pass occupies residues 133 to 153 (ILFIVQTILYTGIVIYAPALA). Over 154 to 161 (LNQVTGFD) the chain is Extracellular. Residues 162–182 (LWGAVVATGVVCTFYCTLGGL) traverse the membrane as a helical segment. Residues 183–184 (KA) lie on the Cytoplasmic side of the membrane. The helical transmembrane segment at 185-205 (VVWTDVFQVGIMVAGFASVII) threads the bilayer. Topologically, residues 206–239 (QASITQHGINKILSDAFNGGRLNFWNFDPNPLQR) are extracellular. The helical transmembrane segment at 240–260 (HTFWTIVIGGTFTWTTIYGVN) threads the bilayer. Residues 261 to 279 (QSQVQRYISCKSRLHAKLS) lie on the Cytoplasmic side of the membrane. Residues 280-300 (LYVNLVGLWVILTCSIFCGLA) form a helical membrane-spanning segment. The Extracellular portion of the chain corresponds to 301-336 (LYSRYRECDPWTSKKVSAIDQLMPYLVLDILKNYPG). Residues 337–359 (VPGLFVACAYSGTLSTVSSSINA) form a helical membrane-spanning segment. The Cytoplasmic segment spans residues 360–389 (LAAVTVEDLIKPRFKSLSEKSLSWISQGMS). A helical membrane pass occupies residues 390 to 410 (VLYGALCIGMAALASLMGALL). Topologically, residues 411 to 415 (QAALS) are extracellular. Residues 416–436 (IFGMVGGPLLGLFSLGILVPF) traverse the membrane as a helical segment. Residues 437 to 439 (ANS) lie on the Cytoplasmic side of the membrane. Residues 440–460 (IGALTGLLAGFAISLWVGIGA) form a helical membrane-spanning segment. Residues 461 to 518 (QLYPPLPERTLPLPLETYGCNITHNGSDWMSTTEMPFSTSAFQIHNAERTPLMDNWYS) are Extracellular-facing. N485 carries N-linked (GlcNAc...) asparagine glycosylation. Residues 519-539 (LSYLYFSTIGTLTTLFVGILI) form a helical membrane-spanning segment. The Cytoplasmic portion of the chain corresponds to 540-611 (SLSTGGRKQN…HSGKINGTRL (72 aa)). A PDZ-binding motif is present at residues 609-611 (TRL).

Belongs to the sodium:solute symporter (SSF) (TC 2.A.21) family. In terms of assembly, interacts (via PDZ-binding motif) with PDZK1 (via PDZ domains 1 and 3); interaction increases nicotinate transport activity of SLC5A8. In terms of tissue distribution, expressed in brain, colon, kidney and in the ileum and jejunum of small intestine. In the kidney, expression occurred in the proximal tubule and the loop of Henle, being restricted to tubular epithelial cells in both the cortex and the medulla. In the colon, predominantly expressed in the distal half of the large bowel and in the most terminal ileum. Localized selectively in the luminal surface of crypts in the large intestine and to the brush border in the middle parts of crypts in the cecum. In the brain, expression was seen throughout, exclusively in neurons, including the cortex, hippocampus, cerebellum and pituitary gland (at protein level). Expression is reduced in oligodendrogliomas.

The protein resides in the apical cell membrane. It catalyses the reaction (S)-lactate(out) + 2 Na(+)(out) = (S)-lactate(in) + 2 Na(+)(in). The enzyme catalyses propanoate(out) + 2 Na(+)(out) = propanoate(in) + 2 Na(+)(in). It carries out the reaction pyruvate(out) + 2 Na(+)(out) = pyruvate(in) + 2 Na(+)(in). The catalysed reaction is acetate(out) + 2 Na(+)(out) = acetate(in) + 2 Na(+)(in). It catalyses the reaction butanoate(out) + 2 Na(+)(out) = butanoate(in) + 2 Na(+)(in). The enzyme catalyses nicotinate(out) + 2 Na(+)(out) = nicotinate(in) + 2 Na(+)(in). It carries out the reaction (R)-3-hydroxybutanoate(out) + 2 Na(+)(out) = (R)-3-hydroxybutanoate(in) + 2 Na(+)(in). The catalysed reaction is acetoacetate(out) + 2 Na(+)(out) = acetoacetate(in) + 2 Na(+)(in). It catalyses the reaction 4-methyl-2-oxopentanoate(out) + 2 Na(+)(out) = 4-methyl-2-oxopentanoate(in) + 2 Na(+)(in). The enzyme catalyses 5-oxo-L-proline(out) + 2 Na(+)(out) = 5-oxo-L-proline(in) + 2 Na(+)(in). It carries out the reaction iodide(out) = iodide(in). The catalysed reaction is chloride(in) = chloride(out). It catalyses the reaction nitrate(in) = nitrate(out). The enzyme catalyses bromide(in) = bromide(out). With respect to regulation, transport of D-lactate and pyruvate stimulated by alpha-cyano-4-hydroxycinnamic acid, but inhibited by the short-chain fatty acids acetate, propionate and butyrate. Its function is as follows. Acts as an electrogenic sodium (Na(+)) and chloride (Cl-)-dependent sodium-coupled solute transporter, including transport of monocarboxylates (short-chain fatty acids including L-lactate, D-lactate, pyruvate, acetate, propionate, valerate and butyrate), mocarboxylate drugs (nicotinate, benzoate, salicylate and 5-aminosalicylate) and ketone bodies (beta-D-hydroxybutyrate, acetoacetate and alpha-ketoisocaproate), with a Na(+):substrate stoichiometry of between 4:1 and 2:1. Catalyzes passive carrier mediated diffusion of iodide. Mediates iodide transport from the thyrocyte into the colloid lumen through the apical membrane. May be responsible for the absorption of D-lactate and monocarboxylate drugs from the intestinal tract. May play a critical role in the entry of L-lactate and ketone bodies into neurons by a process driven by an electrochemical Na(+) gradient and hence contribute to the maintenance of the energy status and function of neurons. Mediates sodium-coupled electrogenic transport of pyroglutamate (5-oxo-L-proline). Can mediate the transport of chloride, bromide, iodide and nitrate ions when external concentration of sodium ions is reduced. The chain is Sodium-coupled monocarboxylate transporter 1 from Mus musculus (Mouse).